The chain runs to 259 residues: DNA-directed RNA polymerase subunit Rpo3 (259 aa).

This sequence belongs to the archaeal Rpo3/eukaryotic RPB3 RNA polymerase subunit family. As to quaternary structure, part of the RNA polymerase complex.

It localises to the cytoplasm. The catalysed reaction is RNA(n) + a ribonucleoside 5'-triphosphate = RNA(n+1) + diphosphate. Functionally, DNA-dependent RNA polymerase (RNAP) catalyzes the transcription of DNA into RNA using the four ribonucleoside triphosphates as substrates. This is DNA-directed RNA polymerase subunit Rpo3 from Pyrobaculum arsenaticum (strain DSM 13514 / JCM 11321 / PZ6).